A 225-amino-acid polypeptide reads, in one-letter code: NAD(P)H-quinone oxidoreductase subunit K, chloroplastic (225 aa).

[4Fe-4S] cluster is bound by residues Cys-43, Cys-44, Cys-108, and Cys-139.

Belongs to the complex I 20 kDa subunit family. As to quaternary structure, NDH is composed of at least 16 different subunits, 5 of which are encoded in the nucleus. The cofactor is [4Fe-4S] cluster.

The protein localises to the plastid. The protein resides in the chloroplast thylakoid membrane. The enzyme catalyses a plastoquinone + NADH + (n+1) H(+)(in) = a plastoquinol + NAD(+) + n H(+)(out). The catalysed reaction is a plastoquinone + NADPH + (n+1) H(+)(in) = a plastoquinol + NADP(+) + n H(+)(out). Its function is as follows. NDH shuttles electrons from NAD(P)H:plastoquinone, via FMN and iron-sulfur (Fe-S) centers, to quinones in the photosynthetic chain and possibly in a chloroplast respiratory chain. The immediate electron acceptor for the enzyme in this species is believed to be plastoquinone. Couples the redox reaction to proton translocation, and thus conserves the redox energy in a proton gradient. In Fagopyrum esculentum subsp. ancestrale (Wild buckwheat), this protein is NAD(P)H-quinone oxidoreductase subunit K, chloroplastic.